A 311-amino-acid chain; its full sequence is Regulator of rDNA transcription protein 6 (311 aa).

Transmembrane regions (helical) follow at residues 32-52 (PHLL…SAEL) and 271-291 (YLIV…IIVT).

It localises to the membrane. Functionally, may be involved in the modulation of rDNA transcription. This Saccharomyces cerevisiae (strain ATCC 204508 / S288c) (Baker's yeast) protein is Regulator of rDNA transcription protein 6 (RRT6).